The sequence spans 220 residues: Ribosome maturation factor RimP (220 aa).

The segment covering 1-15 (MSQRGRATRPTGPTG) has biased composition (low complexity). Disordered stretches follow at residues 1–35 (MSQRGRATRPTGPTGRPRRTGGQRSAGRVSRGGDL) and 184–220 (PGRVQVEFTRPGETDGADGADEAGDFDDDDDVEGEER). Acidic residues predominate over residues 198–220 (DGADGADEAGDFDDDDDVEGEER).

The protein belongs to the RimP family.

The protein localises to the cytoplasm. Required for maturation of 30S ribosomal subunits. The chain is Ribosome maturation factor RimP from Salinispora tropica (strain ATCC BAA-916 / DSM 44818 / JCM 13857 / NBRC 105044 / CNB-440).